We begin with the raw amino-acid sequence, 359 residues long: Phospho-N-acetylmuramoyl-pentapeptide-transferase (359 aa).

10 helical membrane-spanning segments follow: residues 27–47, 73–93, 94–114, 134–154, 166–186, 197–217, 233–253, 261–281, 286–306, and 336–356; these read IYAL…MMRW, TMGG…WADL, TNIY…VGFV, LLGQ…QPAY, FTPD…IGAS, GLAI…IYIA, GVGE…GFLW, LFMG…IAVL, LLLI…IMQV, and KIVI…LSTL.

It belongs to the glycosyltransferase 4 family. MraY subfamily. Mg(2+) is required as a cofactor.

It localises to the cell inner membrane. The enzyme catalyses UDP-N-acetyl-alpha-D-muramoyl-L-alanyl-gamma-D-glutamyl-meso-2,6-diaminopimeloyl-D-alanyl-D-alanine + di-trans,octa-cis-undecaprenyl phosphate = di-trans,octa-cis-undecaprenyl diphospho-N-acetyl-alpha-D-muramoyl-L-alanyl-D-glutamyl-meso-2,6-diaminopimeloyl-D-alanyl-D-alanine + UMP. The protein operates within cell wall biogenesis; peptidoglycan biosynthesis. Its function is as follows. Catalyzes the initial step of the lipid cycle reactions in the biosynthesis of the cell wall peptidoglycan: transfers peptidoglycan precursor phospho-MurNAc-pentapeptide from UDP-MurNAc-pentapeptide onto the lipid carrier undecaprenyl phosphate, yielding undecaprenyl-pyrophosphoryl-MurNAc-pentapeptide, known as lipid I. The chain is Phospho-N-acetylmuramoyl-pentapeptide-transferase from Maridesulfovibrio salexigens (strain ATCC 14822 / DSM 2638 / NCIMB 8403 / VKM B-1763) (Desulfovibrio salexigens).